We begin with the raw amino-acid sequence, 112 residues long: Protein Churchill (112 aa).

Residues C2, C5, C30, C33, H59, C61, C64, H66, H71, C88, and C91 each coordinate Zn(2+).

Belongs to the Churchill family.

Transcriptional activator that mediates FGF signaling during neural development. Plays a role in the regulation of cell movement. Does not bind DNA by itself. The chain is Protein Churchill (Churc1) from Mus musculus (Mouse).